The primary structure comprises 88 residues: Small ribosomal subunit protein uS17 (88 aa).

The protein belongs to the universal ribosomal protein uS17 family. As to quaternary structure, part of the 30S ribosomal subunit.

Its function is as follows. One of the primary rRNA binding proteins, it binds specifically to the 5'-end of 16S ribosomal RNA. The protein is Small ribosomal subunit protein uS17 of Lactobacillus helveticus (strain DPC 4571).